The sequence spans 292 residues: Seed lectin (292 aa).

The first 37 residues, 1 to 37 (MATSNSRPHLLQTHKPFSVVLAISITFFLLLLNKVNS), serve as a signal peptide directing secretion. Asn-82 and Asn-154 each carry an N-linked (GlcNAc...) asparagine glycan. Residues Asp-163 and Asp-165 each contribute to the Mn(2+) site. Residues Asp-165, His-167, Asn-169, and Asp-172 each coordinate Ca(2+). 2 residues coordinate Mn(2+): Asp-172 and His-177. Asn-186 carries an N-linked (GlcNAc...) asparagine glycan.

The protein belongs to the leguminous lectin family.

In terms of biological role, mannose/glucose-specific lectin. The polypeptide is Seed lectin (Styphnolobium japonicum (Japanese pagoda tree)).